Here is a 350-residue protein sequence, read N- to C-terminus: Biotin synthase (350 aa).

Residues 38 to 256 (NHVQVSTLLS…IAVARIMMPE (219 aa)) form the Radical SAM core domain. [4Fe-4S] cluster is bound by residues Cys-53, Cys-57, and Cys-60. Residues Cys-97, Cys-128, Cys-188, and Arg-260 each contribute to the [2Fe-2S] cluster site.

The protein belongs to the radical SAM superfamily. Biotin synthase family. As to quaternary structure, homodimer. Requires [4Fe-4S] cluster as cofactor. [2Fe-2S] cluster serves as cofactor.

The enzyme catalyses (4R,5S)-dethiobiotin + (sulfur carrier)-SH + 2 reduced [2Fe-2S]-[ferredoxin] + 2 S-adenosyl-L-methionine = (sulfur carrier)-H + biotin + 2 5'-deoxyadenosine + 2 L-methionine + 2 oxidized [2Fe-2S]-[ferredoxin]. The protein operates within cofactor biosynthesis; biotin biosynthesis; biotin from 7,8-diaminononanoate: step 2/2. Catalyzes the conversion of dethiobiotin (DTB) to biotin by the insertion of a sulfur atom into dethiobiotin via a radical-based mechanism. The polypeptide is Biotin synthase (Aliivibrio fischeri (strain ATCC 700601 / ES114) (Vibrio fischeri)).